Reading from the N-terminus, the 457-residue chain is Paired box protein Pax-8 (457 aa).

Residues 9-135 (GHGGLNQLGG…SSINRIIRTK (127 aa)) constitute a DNA-binding region (paired). The interval 12–68 (GLNQLGGAFVNGRPLPEVVRQRIVDLAHQGVRPCDISRQLRVSHGCVSKILGRYYET) is PAI subdomain. An RED subdomain region spans residues 87 to 135 (KVVEKIGDYKRQNPTMFAWEIRDRLLAEGVCDNDTVPSVSSINRIIRTK). A compositionally biased stretch (polar residues) spans 159–182 (LIPSSAVTPPESPQSDSLGSTYSI). Residues 159-226 (LIPSSAVTPP…SSGPRKHLRT (68 aa)) form a disordered region. Residue serine 304 is modified to Phosphoserine.

As to quaternary structure, interacts with WWTR1.

Its subcellular location is the nucleus. Functionally, thought to encode a transcription factor. It may have a role in kidney cell differentiation. May play a regulatory role in mammalian development. This chain is Paired box protein Pax-8 (Pax8), found in Rattus norvegicus (Rat).